We begin with the raw amino-acid sequence, 60 residues long: MGQLKITQHKGLVGAKQNQKDSMRTLGLRKIRQSVVRPDTPDVRGLVNVVHHLVTVEEVD.

This sequence belongs to the universal ribosomal protein uL30 family. Part of the 50S ribosomal subunit.

The chain is Large ribosomal subunit protein uL30 from Saccharopolyspora erythraea (strain ATCC 11635 / DSM 40517 / JCM 4748 / NBRC 13426 / NCIMB 8594 / NRRL 2338).